Consider the following 289-residue polypeptide: Nucleotide-binding protein FRAAL4592 (289 aa).

13 to 20 (GLSGAGRS) is a binding site for ATP. Residue 64–67 (DVRG) coordinates GTP.

It belongs to the RapZ-like family.

Its function is as follows. Displays ATPase and GTPase activities. The polypeptide is Nucleotide-binding protein FRAAL4592 (Frankia alni (strain DSM 45986 / CECT 9034 / ACN14a)).